The primary structure comprises 280 residues: Ribosomal RNA small subunit methyltransferase A (280 aa).

Positions 13, 15, 40, 61, 85, and 106 each coordinate S-adenosyl-L-methionine. Residues 258–280 (RPPADVEDANAPHTEQGKGDNSQ) form a disordered region.

It belongs to the class I-like SAM-binding methyltransferase superfamily. rRNA adenine N(6)-methyltransferase family. RsmA subfamily.

Its subcellular location is the cytoplasm. It catalyses the reaction adenosine(1518)/adenosine(1519) in 16S rRNA + 4 S-adenosyl-L-methionine = N(6)-dimethyladenosine(1518)/N(6)-dimethyladenosine(1519) in 16S rRNA + 4 S-adenosyl-L-homocysteine + 4 H(+). Its function is as follows. Specifically dimethylates two adjacent adenosines (A1518 and A1519) in the loop of a conserved hairpin near the 3'-end of 16S rRNA in the 30S particle. May play a critical role in biogenesis of 30S subunits. This is Ribosomal RNA small subunit methyltransferase A from Alcanivorax borkumensis (strain ATCC 700651 / DSM 11573 / NCIMB 13689 / SK2).